We begin with the raw amino-acid sequence, 225 residues long: THAP domain-containing protein 1 A (225 aa).

The THAP-type zinc-finger motif lies at 5–57; that stretch reads CSAYGCKNRYDKDKPISFHKFPLKRPLLCKKWEAAVRRAEFKPTKYSSICSDH. Residues 139–194 adopt a coiled-coil conformation; it reads VEDTVHQRRRIQQLEEQVDKLRKKLKIANQKCRRQERSLEKLEREVSEYREAKGSG.

It belongs to the THAP1 family.

It is found in the nucleus. Its subcellular location is the nucleoplasm. Functionally, DNA-binding transcription regulator that regulates endothelial cell proliferation and G1/S cell-cycle progression. Specifically binds the 5'-[AT]NTNN[GT]GGCA[AGT]-3' core DNA sequence and acts by modulating expression of pRB-E2F cell-cycle target genes. The sequence is that of THAP domain-containing protein 1 A (thap1-a) from Xenopus laevis (African clawed frog).